The chain runs to 300 residues: MNQTYGRLVSRAAIAATAMASALLLIKIFAWWYTGSVSILAALVDSLVDIAASLTNLLVVRYSLQPADDEHTFGHGKAESLAALAQSMFISGSALFLFLTSIQNLIKPTPMNDPGVGIGVTVIALICTIILVTFQRWVVRKTQSQAVRADMLHYQSDVMMNGAILIALGLSWYGWHRADALFALGIGIYILYSALRMGYEAVQSLLDRALPDAERQEIIDIVTSWPGVSGAHDLRTRQSGPTRFIQIHLEMEDNLPLVQAHFVADQVEQAILQRFPGSDVIIHQDPCSVVPREGRKFELV.

A helical membrane pass occupies residues 24–44 (LLIKIFAWWYTGSVSILAALV). Residues Asp-45 and Asp-49 each coordinate Zn(2+). Transmembrane regions (helical) follow at residues 82 to 102 (AALAQSMFISGSALFLFLTSI) and 114 to 134 (PGVGIGVTVIALICTIILVTF). Zn(2+) is bound by residues His-153 and Asp-157. 2 consecutive transmembrane segments (helical) span residues 156 to 176 (SDVMMNGAILIALGLSWYGWH) and 178 to 198 (ADALFALGIGIYILYSALRMG).

The protein belongs to the cation diffusion facilitator (CDF) transporter (TC 2.A.4) family. FieF subfamily. In terms of assembly, homodimer.

It localises to the cell inner membrane. The enzyme catalyses Zn(2+)(in) + H(+)(out) = Zn(2+)(out) + H(+)(in). It carries out the reaction Cd(2+)(in) + H(+)(out) = Cd(2+)(out) + H(+)(in). It catalyses the reaction Fe(2+)(in) + H(+)(out) = Fe(2+)(out) + H(+)(in). In terms of biological role, divalent metal cation transporter which exports Zn(2+), Cd(2+) and possibly Fe(2+). May be involved in zinc and iron detoxification by efflux. The protein is Cation-efflux pump FieF of Salmonella enteritidis PT4 (strain P125109).